Reading from the N-terminus, the 263-residue chain is Putative TATA-binding protein pB263R (263 aa).

It belongs to the asfivirus B263R family.

In terms of biological role, putative TATA-binding protein. The protein is Putative TATA-binding protein pB263R of Ornithodoros (relapsing fever ticks).